A 463-amino-acid chain; its full sequence is Regulator of microtubule dynamics protein 3 (463 aa).

Residues methionine 1 to leucine 4 are Mitochondrial intermembrane-facing. A helical membrane pass occupies residues isoleucine 5 to valine 27. Over phenylalanine 28–valine 463 the chain is Cytoplasmic. The FFAT motif lies at isoleucine 146–serine 161. The disordered stretch occupies residues glycine 153–cysteine 192. Over residues aspartate 173–glutamate 183 the composition is skewed to basic and acidic residues. A coiled-coil region spans residues alanine 279–lysine 302.

It belongs to the RMDN family. In terms of assembly, interacts with PTPN2. Interacts with microtubules. Interacts with VAPB. Interacts (FFAT motif) with MOSPD2 (via MSP domain).

It is found in the mitochondrion outer membrane. Its subcellular location is the cytoplasm. It localises to the nucleus. The protein localises to the cytoskeleton. The protein resides in the spindle. It is found in the spindle pole. Involved in cellular calcium homeostasis regulation. In Xenopus laevis (African clawed frog), this protein is Regulator of microtubule dynamics protein 3 (rmdn3).